Reading from the N-terminus, the 67-residue chain is UPF0434 protein Reut_A0592 (67 aa).

The protein belongs to the UPF0434 family.

The sequence is that of UPF0434 protein Reut_A0592 from Cupriavidus pinatubonensis (strain JMP 134 / LMG 1197) (Cupriavidus necator (strain JMP 134)).